A 258-amino-acid chain; its full sequence is tRNA pseudouridine synthase A (258 aa).

D53 (nucleophile) is an active-site residue. Y111 is a binding site for substrate.

It belongs to the tRNA pseudouridine synthase TruA family. In terms of assembly, homodimer.

It carries out the reaction uridine(38/39/40) in tRNA = pseudouridine(38/39/40) in tRNA. Its function is as follows. Formation of pseudouridine at positions 38, 39 and 40 in the anticodon stem and loop of transfer RNAs. The polypeptide is tRNA pseudouridine synthase A (Streptococcus agalactiae serotype V (strain ATCC BAA-611 / 2603 V/R)).